We begin with the raw amino-acid sequence, 105 residues long: Small ribosomal subunit protein uS10c (105 aa).

Belongs to the universal ribosomal protein uS10 family. Part of the 30S ribosomal subunit.

The protein resides in the plastid. It localises to the chloroplast. Its function is as follows. Involved in the binding of tRNA to the ribosomes. This chain is Small ribosomal subunit protein uS10c, found in Pyropia yezoensis (Susabi-nori).